Here is a 1300-residue protein sequence, read N- to C-terminus: Phospholipid-transporting ATPase IK (1300 aa).

A compositionally biased stretch (polar residues) spans 1 to 11; it reads MGTGPAQTPRS. The interval 1–98 is disordered; the sequence is MGTGPAQTPR…SLGQREDLQD (98 aa). The Cytoplasmic portion of the chain corresponds to 1-149; that stretch reads MGTGPAQTPR…TAKYNFYSFL (149 aa). The segment covering 65-74 has biased composition (basic residues); the sequence is RRHKAQPGRA. The chain crosses the membrane as a helical span at residues 150-171; sequence PLNLYEQFHRVSNLFFLIIIIL. Over 172-177 the chain is Exoplasmic loop; sequence QSIPDI. The chain crosses the membrane as a helical span at residues 178–197; that stretch reads STLPWFSLSTPMVCLLFIRA. Residues 198–381 are Cytoplasmic-facing; that stretch reads TRDLVDDMGR…TKLDLLMNKL (184 aa). The helical transmembrane segment at 382–403 threads the bilayer; it reads VVVIFISVVLVCLVLAFGFGFS. At 404–430 the chain is on the exoplasmic loop side; it reads VKEFKDHHYYLSGVHGSSVAAESFFVF. Residues 431–452 form a helical membrane-spanning segment; sequence WSFLILLSVTIPMSMFILSEFI. At 453 to 995 the chain is on the cytoplasmic side; it reads YLGNSVFIDW…GRWSYVRICK (543 aa). Asp495 serves as the catalytic 4-aspartylphosphate intermediate. Asp495, Lys496, Thr497, Glu596, Phe637, Lys660, Arg693, Thr763, Gly764, Asp765, Arg913, and Lys919 together coordinate ATP. Residue Asp495 coordinates Mg(2+). Thr497 contacts Mg(2+). Asp939 contributes to the Mg(2+) binding site. Positions 942 and 943 each coordinate ATP. Asp943 contributes to the Mg(2+) binding site. Residues 996–1016 form a helical membrane-spanning segment; sequence FLRYFFYKSMASMMVQVWFAC. Over 1017-1028 the chain is Exoplasmic loop; that stretch reads YNGFTGQPLYEG. A helical membrane pass occupies residues 1029-1048; sequence WFLALFNLLYSTLPVLYIGL. Residues 1049–1078 lie on the Cytoplasmic side of the membrane; it reads FEQDVSAEQSLEKPELYVVGQKDELFNYWV. A helical membrane pass occupies residues 1079–1100; that stretch reads FVQAIAHGVTTSLVNFFMTLWI. Residues 1101–1112 lie on the Exoplasmic loop side of the membrane; that stretch reads SRDTAGPASFSD. A helical membrane pass occupies residues 1113–1135; that stretch reads HQSFAVVVALSCLLSITMEVILI. Topologically, residues 1136 to 1141 are cytoplasmic; that stretch reads IKYWTA. The helical transmembrane segment at 1142-1162 threads the bilayer; it reads LCVATILLSLGFYAIMTTTTQ. Residues 1163–1182 are Exoplasmic loop-facing; that stretch reads SFWLFRVSPTTFPFLYADLS. The helical transmembrane segment at 1183 to 1207 threads the bilayer; it reads VMSSPSILLVVLLSVSINTFPVLAL. Residues 1208 to 1300 lie on the Cytoplasmic side of the membrane; the sequence is RVIFPALKEL…EAASSPKESQ (93 aa). The interval 1272 to 1300 is disordered; that stretch reads RGPGVSSDIASESLDPSDEEAASSPKESQ.

It belongs to the cation transport ATPase (P-type) (TC 3.A.3) family. Type IV subfamily. Mg(2+) serves as cofactor. In terms of tissue distribution, isoform 3 was only detected in testis.

The protein localises to the cytoplasmic vesicle. The protein resides in the secretory vesicle. It is found in the acrosome membrane. Its subcellular location is the endoplasmic reticulum membrane. The enzyme catalyses ATP + H2O + phospholipidSide 1 = ADP + phosphate + phospholipidSide 2.. The catalysed reaction is a 1,2-diacyl-sn-glycero-3-phospho-L-serine(out) + ATP + H2O = a 1,2-diacyl-sn-glycero-3-phospho-L-serine(in) + ADP + phosphate + H(+). Functionally, P4-ATPase flippase which catalyzes the hydrolysis of ATP coupled to the transport of aminophospholipids from the outer to the inner leaflet of various membranes and ensures the maintenance of asymmetric distribution of phospholipids. Phospholipid translocation also seems to be implicated in vesicle formation and in uptake of lipid signaling molecules. May be responsible for the maintenance of asymmetric distribution of phosphatidylserine (PS) in spermatozoa membranes. Involved in acrosome reactions and binding of spermatozoa to zona pellucida. The protein is Phospholipid-transporting ATPase IK of Homo sapiens (Human).